We begin with the raw amino-acid sequence, 710 residues long: Ephexin-1 (710 aa).

2 stretches are compositionally biased toward basic and acidic residues: residues 1-11 (METRESEDLEK) and 26-41 (EPAKVKPELLPEKEET). Residues 1–143 (METRESEDLE…PGNGATPEEW (143 aa)) are disordered. A regulatory region; modulates activity toward RHOA, RAC1 and CDC42 region spans residues 1–273 (METRESEDLE…LEILQPEEIK (273 aa)). Composition is skewed to polar residues over residues 89-102 (ADSQDNGKSVNEPL) and 127-136 (MSESSSTPGN). Residue Y179 is modified to Phosphotyrosine. Residues 194-236 (RRQQDAEIEDNTNGSPASEDTPEEEEEEEEEEEPASPPERKTL) form a disordered region. Positions 213–227 (DTPEEEEEEEEEEEP) are enriched in acidic residues. One can recognise a DH domain in the interval 273-457 (KLQEAMFELV…EMVVKACNEG (185 aa)). In terms of domain architecture, PH spans 489 to 601 (WLLKQGELQQ…WMTSLAPNRR (113 aa)). In terms of domain architecture, SH3 spans 612–673 (LDCPQVQCVH…PSSMTEEILN (62 aa)). Basic and acidic residues predominate over residues 687-699 (VHKMDDPQRSQNK). Positions 687–710 (VHKMDDPQRSQNKDRRKLGSRNRQ) are disordered. Residues 700–710 (DRRKLGSRNRQ) show a composition bias toward basic residues.

In terms of assembly, interacts with CDK5R1 and EPHA4; activated by EPHA4 through the CDK5 kinase. In terms of processing, src-dependent phosphorylation at Tyr-179 upon EPHA4 activation increases the guanine exchange factor activity toward RHOA. Phosphorylation by CDK5 upon EPHA4 activation by EFNA1 may regulate dendritic spine morphogenesis. Highly expressed in brain specifically in caudate nucleus and to a lower extent in amygdala and hippocampus. Also detected in lung.

It is found in the cytoplasm. It localises to the membrane. The protein localises to the cell projection. The protein resides in the growth cone. Acts as a guanine nucleotide exchange factor (GEF) which differentially activates the GTPases RHOA, RAC1 and CDC42. Plays a role in axon guidance regulating ephrin-induced growth cone collapse and dendritic spine morphogenesis. Upon activation by ephrin through EPHA4, the GEF activity switches toward RHOA resulting in its activation. Activated RHOA promotes cone retraction at the expense of RAC1- and CDC42-stimulated growth cone extension. In Homo sapiens (Human), this protein is Ephexin-1 (NGEF).